A 327-amino-acid polypeptide reads, in one-letter code: Undecaprenyl-phosphate 4-deoxy-4-formamido-L-arabinose transferase (327 aa).

The next 2 helical transmembrane spans lie at 233–253 (ILSLIGSVVALSGFLLALLLI) and 268–288 (VFTLFAVLFMFIGAQFVGMGL).

This sequence belongs to the glycosyltransferase 2 family.

Its subcellular location is the cell inner membrane. The catalysed reaction is UDP-4-deoxy-4-formamido-beta-L-arabinose + di-trans,octa-cis-undecaprenyl phosphate = 4-deoxy-4-formamido-alpha-L-arabinopyranosyl di-trans,octa-cis-undecaprenyl phosphate + UDP. Its pathway is glycolipid biosynthesis; 4-amino-4-deoxy-alpha-L-arabinose undecaprenyl phosphate biosynthesis; 4-amino-4-deoxy-alpha-L-arabinose undecaprenyl phosphate from UDP-4-deoxy-4-formamido-beta-L-arabinose and undecaprenyl phosphate: step 1/2. The protein operates within bacterial outer membrane biogenesis; lipopolysaccharide biosynthesis. Functionally, catalyzes the transfer of 4-deoxy-4-formamido-L-arabinose from UDP to undecaprenyl phosphate. The modified arabinose is attached to lipid A and is required for resistance to polymyxin and cationic antimicrobial peptides. This is Undecaprenyl-phosphate 4-deoxy-4-formamido-L-arabinose transferase from Pectobacterium carotovorum subsp. carotovorum (strain PC1).